The sequence spans 157 residues: uncharacterized protein (157 aa).

Residues 1–28 (MKRLFMKASLVLFAVVFVFAVKGAPAKA) form the signal peptide.

This is an uncharacterized protein from Bacillus subtilis (strain 168).